A 137-amino-acid chain; its full sequence is Large ribosomal subunit protein eL28 (137 aa).

S2 carries the post-translational modification N-acetylserine. Residues K58 and K65 each participate in a glycyl lysine isopeptide (Lys-Gly) (interchain with G-Cter in SUMO2) cross-link. S115 is subject to Phosphoserine.

The protein belongs to the eukaryotic ribosomal protein eL28 family. As to quaternary structure, component of the large ribosomal subunit.

The protein resides in the cytoplasm. Its function is as follows. Component of the large ribosomal subunit. The ribosome is a large ribonucleoprotein complex responsible for the synthesis of proteins in the cell. This Homo sapiens (Human) protein is Large ribosomal subunit protein eL28 (RPL28).